Consider the following 525-residue polypeptide: D-arabinono-1,4-lactone oxidase (525 aa).

The 175-residue stretch at 23–197 (YSCRPQLYFQ…VKATIRVIPE (175 aa)) folds into the FAD-binding PCMH-type domain. His60 bears the Pros-8alpha-FAD histidine mark.

It belongs to the oxygen-dependent FAD-linked oxidoreductase family. Requires FAD as cofactor.

Its subcellular location is the mitochondrion membrane. The enzyme catalyses D-arabinono-1,4-lactone + O2 = dehydro-D-arabinono-1,4-lactone + H2O2 + H(+). It participates in cofactor biosynthesis; D-erythroascorbate biosynthesis; dehydro-D-arabinono-1,4-lactone from D-arabinose: step 2/2. This Kluyveromyces lactis (strain ATCC 8585 / CBS 2359 / DSM 70799 / NBRC 1267 / NRRL Y-1140 / WM37) (Yeast) protein is D-arabinono-1,4-lactone oxidase (ALO1).